The primary structure comprises 160 residues: D-aminoacyl-tRNA deacylase (160 aa).

Positions 137–138 (GP) match the Gly-cisPro motif, important for rejection of L-amino acids motif.

The protein belongs to the DTD family. As to quaternary structure, homodimer.

The protein resides in the cytoplasm. It catalyses the reaction glycyl-tRNA(Ala) + H2O = tRNA(Ala) + glycine + H(+). The catalysed reaction is a D-aminoacyl-tRNA + H2O = a tRNA + a D-alpha-amino acid + H(+). Functionally, an aminoacyl-tRNA editing enzyme that deacylates mischarged D-aminoacyl-tRNAs. Also deacylates mischarged glycyl-tRNA(Ala), protecting cells against glycine mischarging by AlaRS. Acts via tRNA-based rather than protein-based catalysis; rejects L-amino acids rather than detecting D-amino acids in the active site. By recycling D-aminoacyl-tRNA to D-amino acids and free tRNA molecules, this enzyme counteracts the toxicity associated with the formation of D-aminoacyl-tRNA entities in vivo and helps enforce protein L-homochirality. The polypeptide is D-aminoacyl-tRNA deacylase (Chloroflexus aurantiacus (strain ATCC 29364 / DSM 637 / Y-400-fl)).